A 371-amino-acid polypeptide reads, in one-letter code: Chaperone protein DnaJ (371 aa).

The J domain maps to Cys5–Gly70. The CR-type zinc-finger motif lies at Gly127–Gln204. Zn(2+)-binding residues include Cys140, Cys143, Cys156, Cys159, Cys178, Cys181, Cys192, and Cys195. CXXCXGXG motif repeat units follow at residues Cys140–Gly147, Cys156–Gly163, Cys178–Gly185, and Cys192–Gly199.

Belongs to the DnaJ family. Homodimer. Zn(2+) is required as a cofactor.

The protein localises to the cytoplasm. In terms of biological role, participates actively in the response to hyperosmotic and heat shock by preventing the aggregation of stress-denatured proteins and by disaggregating proteins, also in an autonomous, DnaK-independent fashion. Unfolded proteins bind initially to DnaJ; upon interaction with the DnaJ-bound protein, DnaK hydrolyzes its bound ATP, resulting in the formation of a stable complex. GrpE releases ADP from DnaK; ATP binding to DnaK triggers the release of the substrate protein, thus completing the reaction cycle. Several rounds of ATP-dependent interactions between DnaJ, DnaK and GrpE are required for fully efficient folding. Also involved, together with DnaK and GrpE, in the DNA replication of plasmids through activation of initiation proteins. The chain is Chaperone protein DnaJ from Francisella tularensis subsp. holarctica (strain LVS).